Consider the following 435-residue polypeptide: Gamma-glutamyl phosphate reductase (435 aa).

The protein belongs to the gamma-glutamyl phosphate reductase family.

It localises to the cytoplasm. It catalyses the reaction L-glutamate 5-semialdehyde + phosphate + NADP(+) = L-glutamyl 5-phosphate + NADPH + H(+). It participates in amino-acid biosynthesis; L-proline biosynthesis; L-glutamate 5-semialdehyde from L-glutamate: step 2/2. Catalyzes the NADPH-dependent reduction of L-glutamate 5-phosphate into L-glutamate 5-semialdehyde and phosphate. The product spontaneously undergoes cyclization to form 1-pyrroline-5-carboxylate. The protein is Gamma-glutamyl phosphate reductase of Synechococcus sp. (strain CC9605).